The primary structure comprises 629 residues: DNA mismatch repair protein MutL (629 aa).

The interval 376-396 is disordered; the sequence is QYHEKPQQNQPHFSNTPVLPN. Positions 382-396 are enriched in polar residues; that stretch reads QQNQPHFSNTPVLPN.

Belongs to the DNA mismatch repair MutL/HexB family.

In terms of biological role, this protein is involved in the repair of mismatches in DNA. It is required for dam-dependent methyl-directed DNA mismatch repair. May act as a 'molecular matchmaker', a protein that promotes the formation of a stable complex between two or more DNA-binding proteins in an ATP-dependent manner without itself being part of a final effector complex. This Haemophilus influenzae (strain PittEE) protein is DNA mismatch repair protein MutL.